The following is a 102-amino-acid chain: Small ribosomal subunit protein bS6 (102 aa).

Belongs to the bacterial ribosomal protein bS6 family.

Functionally, binds together with bS18 to 16S ribosomal RNA. The polypeptide is Small ribosomal subunit protein bS6 (Deinococcus geothermalis (strain DSM 11300 / CIP 105573 / AG-3a)).